Reading from the N-terminus, the 512-residue chain is Envelope glycoprotein (512 aa).

Positions M1 to A15 are cleaved as a signal peptide. N-linked (GlcNAc...) asparagine; by host glycans are attached at residues N185, N263, N289, N378, and N416. Residues G479 to L502 traverse the membrane as a helical segment.

The protein localises to the virion membrane. Its function is as follows. Attaches the virus to host cellular receptor and later induces fusion of virion with host membrane. The protein is Envelope glycoprotein of Thogoto virus (isolate SiAr 126) (Tho).